A 311-amino-acid polypeptide reads, in one-letter code: MAEKYPLQAGDPCVTLTEEDIWDVERLCLEELRVLLVSHLKSHKHLDHLRAKKILSREDAEEVSSRATSRSRAGLLVDMCQDHPRGFQCLKESCKNEVGQEHLVDLLERAFEKHCGDKLTQKWWESGADGRNPRRPPGSEDNSGYTALLPTNPSGGGPSIGSGHSRPRGRDDSGGIGGGVYPFSHGGARVVGGGWGGWGESGGAGRGGSLLSGGHGGHPPHGGPGGGGRDYYGGGGSGYYESIPEPANFPNSGGGGRGGGVRYDAGGDGRLGGLPPDPQEVDDPSLSVQGRGGPAPDPPSPPLRTRRFFCC.

The region spanning 21–110 (IWDVERLCLE…EHLVDLLERA (90 aa)) is the CARD domain. Disordered stretches follow at residues 125 to 181 (ESGA…GGVY), 203 to 230 (GAGR…GGRD), and 243 to 311 (IPEP…FFCC). Residues 140–152 (EDNSGYTALLPTN) show a composition bias toward polar residues. Over residues 252–272 (SGGGGRGGGVRYDAGGDGRLG) the composition is skewed to gly residues.

The protein localises to the host cell membrane. Functionally, activates host NF-kappa-B and JNK pathways. Induces hyperphosphorylation and redistribution of host bcl-10 from the cytoplasm to the plasma membrane. The inhibitory effect of cellular bcl-10 on NF-kappa-B pathway is then overcome allowing NF-kappa-B activation. In Equus caballus (Horse), this protein is CARD domain-containing protein E10 (E10).